Reading from the N-terminus, the 547-residue chain is Pyochelin synthase PchD (547 aa).

Belongs to the ATP-dependent AMP-binding enzyme family.

It catalyses the reaction salicylate + holo-[ACP] + ATP = salicyl-[ACP] + AMP + diphosphate. Its pathway is siderophore biosynthesis. It functions in the pathway antifungal biosynthesis. Functionally, involved in the biosynthesis of the siderophore pyochelin. Specifically adenylates salicylate and loads it onto the holo form of PchE via a thioester linkage to the phosphopanthetheine moiety. Is also involved in the synthesis of the antifungal antibiotic dihydroaeruginoic acid (Dha or hydroxyphenyl-thiazolinyl-carboxylate), a precursor of pyochelin. This Pseudomonas aeruginosa (strain ATCC 15692 / DSM 22644 / CIP 104116 / JCM 14847 / LMG 12228 / 1C / PRS 101 / PAO1) protein is Pyochelin synthase PchD.